An 81-amino-acid chain; its full sequence is Photosystem I iron-sulfur center (81 aa).

2 4Fe-4S ferredoxin-type domains span residues 2–31 and 39–68; these read SHSVKIYDTCIGCTQCVRACPTDVLEMIPW and IASAPRTEDCVGCKRCESACPTDFLSVRVY. [4Fe-4S] cluster is bound by residues cysteine 11, cysteine 14, cysteine 17, cysteine 21, cysteine 48, cysteine 51, cysteine 54, and cysteine 58.

The eukaryotic PSI reaction center is composed of at least 11 subunits. [4Fe-4S] cluster serves as cofactor.

It is found in the plastid. It localises to the chloroplast thylakoid membrane. It carries out the reaction reduced [plastocyanin] + hnu + oxidized [2Fe-2S]-[ferredoxin] = oxidized [plastocyanin] + reduced [2Fe-2S]-[ferredoxin]. Apoprotein for the two 4Fe-4S centers FA and FB of photosystem I (PSI); essential for photochemical activity. FB is the terminal electron acceptor of PSI, donating electrons to ferredoxin. The C-terminus interacts with PsaA/B/D and helps assemble the protein into the PSI complex. Required for binding of PsaD and PsaE to PSI. PSI is a plastocyanin-ferredoxin oxidoreductase, converting photonic excitation into a charge separation, which transfers an electron from the donor P700 chlorophyll pair to the spectroscopically characterized acceptors A0, A1, FX, FA and FB in turn. The sequence is that of Photosystem I iron-sulfur center from Vitis vinifera (Grape).